The chain runs to 308 residues: D-alanine--D-alanine ligase (308 aa).

The region spanning 106 to 305 (KMLWKAFGLP…FEQLVVKILE (200 aa)) is the ATP-grasp domain. Position 136–191 (136–191 (VEKLGLPLMVKPSLEGSSVGLTKVNAIDDLKSAVEFALQYDETVLIEEWLSGDELT)) interacts with ATP. Mg(2+) is bound by residues D259, E272, and N274.

It belongs to the D-alanine--D-alanine ligase family. Requires Mg(2+) as cofactor. Mn(2+) serves as cofactor.

It is found in the cytoplasm. It catalyses the reaction 2 D-alanine + ATP = D-alanyl-D-alanine + ADP + phosphate + H(+). It functions in the pathway cell wall biogenesis; peptidoglycan biosynthesis. Its function is as follows. Cell wall formation. This is D-alanine--D-alanine ligase from Histophilus somni (strain 2336) (Haemophilus somnus).